The following is a 315-amino-acid chain: Glutathione synthetase (315 aa).

The 186-residue stretch at 125-310 (KLFTAWFSDL…ITGMLMDAIE (186 aa)) folds into the ATP-grasp domain. An N-beta-linked (GlcNAc) arginine glycan is attached at Arg256. 2 residues coordinate Mg(2+): Glu281 and Asn283.

It belongs to the prokaryotic GSH synthase family. It depends on Mg(2+) as a cofactor. Mn(2+) is required as a cofactor. In terms of processing, glycosylation at Arg-256 by NleB enhances the glutathione synthetase activity, leading to an increase in glutathione production. Glycosylation may promote C.rodentium survival in oxidative stress conditions.

The enzyme catalyses gamma-L-glutamyl-L-cysteine + glycine + ATP = glutathione + ADP + phosphate + H(+). The protein operates within sulfur metabolism; glutathione biosynthesis; glutathione from L-cysteine and L-glutamate: step 2/2. This is Glutathione synthetase from Citrobacter rodentium.